A 142-amino-acid chain; its full sequence is Large ribosomal subunit protein uL11 (142 aa).

Belongs to the universal ribosomal protein uL11 family. Part of the ribosomal stalk of the 50S ribosomal subunit. Interacts with L10 and the large rRNA to form the base of the stalk. L10 forms an elongated spine to which L12 dimers bind in a sequential fashion forming a multimeric L10(L12)X complex. One or more lysine residues are methylated.

Its function is as follows. Forms part of the ribosomal stalk which helps the ribosome interact with GTP-bound translation factors. The polypeptide is Large ribosomal subunit protein uL11 (Glaesserella parasuis serovar 5 (strain SH0165) (Haemophilus parasuis)).